The following is a 491-amino-acid chain: UDP-N-acetylmuramate--L-alanine ligase (491 aa).

126–132 (GTHGKTT) serves as a coordination point for ATP.

Belongs to the MurCDEF family.

It localises to the cytoplasm. It carries out the reaction UDP-N-acetyl-alpha-D-muramate + L-alanine + ATP = UDP-N-acetyl-alpha-D-muramoyl-L-alanine + ADP + phosphate + H(+). It functions in the pathway cell wall biogenesis; peptidoglycan biosynthesis. Functionally, cell wall formation. This Yersinia enterocolitica serotype O:8 / biotype 1B (strain NCTC 13174 / 8081) protein is UDP-N-acetylmuramate--L-alanine ligase.